The following is a 30-amino-acid chain: Alanine carboxypeptidase (30 aa).

It catalyses the reaction Release of a C-terminal alanine from a peptide or a variety of pteroyl or acyl groups.. The protein is Alanine carboxypeptidase of Geobacillus stearothermophilus (Bacillus stearothermophilus).